The primary structure comprises 206 residues: Large ribosomal subunit protein uL4 (206 aa).

Residues 45-78 (QGNRAQKDREQVKHTTKKPWRQKGTGRARAGMSS) form a disordered region. A compositionally biased stretch (basic residues) spans 58 to 70 (HTTKKPWRQKGTG).

It belongs to the universal ribosomal protein uL4 family. Part of the 50S ribosomal subunit.

Functionally, one of the primary rRNA binding proteins, this protein initially binds near the 5'-end of the 23S rRNA. It is important during the early stages of 50S assembly. It makes multiple contacts with different domains of the 23S rRNA in the assembled 50S subunit and ribosome. Its function is as follows. Forms part of the polypeptide exit tunnel. The sequence is that of Large ribosomal subunit protein uL4 from Burkholderia ambifaria (strain MC40-6).